The chain runs to 61 residues: Small ribosomal subunit protein uS14 (61 aa).

Residues C24, C27, C40, and C43 each coordinate Zn(2+).

The protein belongs to the universal ribosomal protein uS14 family. Zinc-binding uS14 subfamily. In terms of assembly, part of the 30S ribosomal subunit. Contacts proteins S3 and S10. Zn(2+) is required as a cofactor.

Binds 16S rRNA, required for the assembly of 30S particles and may also be responsible for determining the conformation of the 16S rRNA at the A site. The polypeptide is Small ribosomal subunit protein uS14 (Parafrankia sp. (strain EAN1pec)).